Consider the following 255-residue polypeptide: Cytochrome c oxidase subunit 2 (255 aa).

Residues 1–42 (MKFFFFSFINYKVLNDAARPWQIGFQDPATPIMEGIVNLHHD) are Mitochondrial intermembrane-facing. A helical membrane pass occupies residues 43-63 (IIFFLIIIIIFVSWILFRTLF). Over 64 to 83 (LFNSKTNPVAYNFSHGTFIE) the chain is Mitochondrial matrix. Residues 84–104 (LLWTLTPSLVLIGIAVPSFAL) form a helical membrane-spanning segment. The Mitochondrial intermembrane segment spans residues 105–255 (LYSIDEIIDP…IRWVQNKILD (151 aa)). Cu cation-binding residues include H187, C222, E224, C226, H230, and M233. A Mg(2+)-binding site is contributed by E224.

It belongs to the cytochrome c oxidase subunit 2 family. As to quaternary structure, component of the cytochrome c oxidase (complex IV, CIV), a multisubunit enzyme composed of a catalytic core of 3 subunits and several supernumerary subunits. The complex exists as a monomer or a dimer and forms supercomplexes (SCs) in the inner mitochondrial membrane with ubiquinol-cytochrome c oxidoreductase (cytochrome b-c1 complex, complex III, CIII). Requires Cu cation as cofactor.

It is found in the mitochondrion inner membrane. The catalysed reaction is 4 Fe(II)-[cytochrome c] + O2 + 8 H(+)(in) = 4 Fe(III)-[cytochrome c] + 2 H2O + 4 H(+)(out). In terms of biological role, component of the cytochrome c oxidase, the last enzyme in the mitochondrial electron transport chain which drives oxidative phosphorylation. The respiratory chain contains 3 multisubunit complexes succinate dehydrogenase (complex II, CII), ubiquinol-cytochrome c oxidoreductase (cytochrome b-c1 complex, complex III, CIII) and cytochrome c oxidase (complex IV, CIV), that cooperate to transfer electrons derived from NADH and succinate to molecular oxygen, creating an electrochemical gradient over the inner membrane that drives transmembrane transport and the ATP synthase. Cytochrome c oxidase is the component of the respiratory chain that catalyzes the reduction of oxygen to water. Electrons originating from reduced cytochrome c in the intermembrane space (IMS) are transferred via the dinuclear copper A center (CU(A)) of subunit 2 and heme A of subunit 1 to the active site in subunit 1, a binuclear center (BNC) formed by heme A3 and copper B (CU(B)). The BNC reduces molecular oxygen to 2 water molecules using 4 electrons from cytochrome c in the IMS and 4 protons from the mitochondrial matrix. In Cyanidium caldarium (Red alga), this protein is Cytochrome c oxidase subunit 2 (COX2).